A 150-amino-acid chain; its full sequence is 1,4-dihydroxy-2-naphthoyl-CoA hydrolase (150 aa).

Residue aspartate 19 is part of the active site.

It belongs to the 4-hydroxybenzoyl-CoA thioesterase family. DHNA-CoA hydrolase subfamily.

The enzyme catalyses 1,4-dihydroxy-2-naphthoyl-CoA + H2O = 1,4-dihydroxy-2-naphthoate + CoA + H(+). Its pathway is cofactor biosynthesis; phylloquinone biosynthesis. The protein operates within quinol/quinone metabolism; 1,4-dihydroxy-2-naphthoate biosynthesis; 1,4-dihydroxy-2-naphthoate from chorismate: step 7/7. Its function is as follows. Catalyzes the hydrolysis of 1,4-dihydroxy-2-naphthoyl-CoA (DHNA-CoA) to 1,4-dihydroxy-2-naphthoate (DHNA), a reaction involved in phylloquinone (vitamin K1) biosynthesis. This is 1,4-dihydroxy-2-naphthoyl-CoA hydrolase from Prochlorococcus marinus subsp. pastoris (strain CCMP1986 / NIES-2087 / MED4).